A 329-amino-acid chain; its full sequence is Lipoyl synthase (329 aa).

[4Fe-4S] cluster is bound by residues Cys-55, Cys-60, Cys-66, Cys-81, Cys-85, Cys-88, and Ser-292. Positions 67-281 (WEDREATFLI…KAEAEAIGFL (215 aa)) constitute a Radical SAM core domain.

This sequence belongs to the radical SAM superfamily. Lipoyl synthase family. It depends on [4Fe-4S] cluster as a cofactor.

It is found in the cytoplasm. The catalysed reaction is [[Fe-S] cluster scaffold protein carrying a second [4Fe-4S](2+) cluster] + N(6)-octanoyl-L-lysyl-[protein] + 2 oxidized [2Fe-2S]-[ferredoxin] + 2 S-adenosyl-L-methionine + 4 H(+) = [[Fe-S] cluster scaffold protein] + N(6)-[(R)-dihydrolipoyl]-L-lysyl-[protein] + 4 Fe(3+) + 2 hydrogen sulfide + 2 5'-deoxyadenosine + 2 L-methionine + 2 reduced [2Fe-2S]-[ferredoxin]. The protein operates within protein modification; protein lipoylation via endogenous pathway; protein N(6)-(lipoyl)lysine from octanoyl-[acyl-carrier-protein]: step 2/2. Functionally, catalyzes the radical-mediated insertion of two sulfur atoms into the C-6 and C-8 positions of the octanoyl moiety bound to the lipoyl domains of lipoate-dependent enzymes, thereby converting the octanoylated domains into lipoylated derivatives. This Clavibacter sepedonicus (Clavibacter michiganensis subsp. sepedonicus) protein is Lipoyl synthase.